The following is an 888-amino-acid chain: Bifunctional uridylyltransferase/uridylyl-removing enzyme (888 aa).

The uridylyltransferase stretch occupies residues 1–338 (MIITSPLLDY…LPNYERKIEE (338 aa)). Positions 182–204 (EQAKRHAQHNNTESNLEPDIKNA) are disordered. A uridylyl-removing region spans residues 339-699 (INENFKLVDG…AHRQSAQDAV (361 aa)). An HD domain is found at 457–579 (VDAHTLLLIR…LGDMEHLDYL (123 aa)). 2 ACT domains span residues 700–781 (QIFI…GLMQ) and 809–887 (MVEI…IVSQ).

It belongs to the GlnD family. Mg(2+) serves as cofactor.

It carries out the reaction [protein-PII]-L-tyrosine + UTP = [protein-PII]-uridylyl-L-tyrosine + diphosphate. The enzyme catalyses [protein-PII]-uridylyl-L-tyrosine + H2O = [protein-PII]-L-tyrosine + UMP + H(+). With respect to regulation, uridylyltransferase (UTase) activity is inhibited by glutamine, while glutamine activates uridylyl-removing (UR) activity. Functionally, modifies, by uridylylation and deuridylylation, the PII regulatory proteins (GlnB and homologs), in response to the nitrogen status of the cell that GlnD senses through the glutamine level. Under low glutamine levels, catalyzes the conversion of the PII proteins and UTP to PII-UMP and PPi, while under higher glutamine levels, GlnD hydrolyzes PII-UMP to PII and UMP (deuridylylation). Thus, controls uridylylation state and activity of the PII proteins, and plays an important role in the regulation of nitrogen assimilation and metabolism. In Acinetobacter baylyi (strain ATCC 33305 / BD413 / ADP1), this protein is Bifunctional uridylyltransferase/uridylyl-removing enzyme.